The primary structure comprises 100 residues: HssA/B-like protein 37 (100 aa).

Disordered stretches follow at residues 1–29 (MTLFSSISSMSTSMSGSKSSIASFGSGTS) and 67–100 (RSRGSCGGNRGNGNGNGGMGGGNGSCCGGPCCGI). Residues 71 to 93 (SCGGNRGNGNGNGGMGGGNGSCC) are compositionally biased toward gly residues.

Belongs to the hssA/B family.

The polypeptide is HssA/B-like protein 37 (hssl37) (Dictyostelium discoideum (Social amoeba)).